Reading from the N-terminus, the 506-residue chain is Nucleoside import ATP-binding protein NupA (506 aa).

ABC transporter domains follow at residues 7–242 and 259–503; these read IQMI…VGRS and LEIK…VGGN. Position 39–46 (39–46) interacts with ATP; that stretch reads GENGAGKS.

Belongs to the ABC transporter superfamily. In terms of assembly, the complex is composed of two ATP-binding proteins (NupA), two transmembrane proteins (NupB and NupC) and a solute-binding protein (BmpA).

Its subcellular location is the cell membrane. Functionally, part of an ABC transporter complex involved in the uptake of all common nucleosides. Responsible for energy coupling to the transport system. In Lactococcus lactis subsp. cremoris (strain MG1363), this protein is Nucleoside import ATP-binding protein NupA.